A 130-amino-acid chain; its full sequence is Sigma-w pathway protein YsdB (130 aa).

Residues 2 to 22 form a helical membrane-spanning segment; the sequence is FVMVLRIILLALFAYCIYAVV.

It is found in the membrane. In terms of biological role, may mediate a negative feedback loop that down-regulates the expression of the sigma-W regulon following the activation of sigma-W in response to conditions of cell envelope stress. Might interact with and inhibit the activity of the protease PrsW, or could bind to the anti-sigma-W factor RsiW and thereby protect it from PrsW-mediated cleavage. The polypeptide is Sigma-w pathway protein YsdB (ysdB) (Bacillus subtilis (strain 168)).